The sequence spans 287 residues: Methylamine utilization ferredoxin-type protein MauN (287 aa).

2 consecutive 4Fe-4S ferredoxin-type domains span residues 218 to 248 (RVAA…PALK) and 251 to 280 (GSTL…MTMR). Positions 227, 230, 233, 237, 260, 263, 266, and 270 each coordinate [4Fe-4S] cluster.

It functions in the pathway one-carbon metabolism; methylamine degradation. Its function is as follows. Involved in electron transfer. The protein is Methylamine utilization ferredoxin-type protein MauN (mauN) of Methylorubrum extorquens (strain ATCC 14718 / DSM 1338 / JCM 2805 / NCIMB 9133 / AM1) (Methylobacterium extorquens).